Consider the following 110-residue polypeptide: Large ribosomal subunit protein uL24 (110 aa).

Belongs to the universal ribosomal protein uL24 family. As to quaternary structure, part of the 50S ribosomal subunit.

One of two assembly initiator proteins, it binds directly to the 5'-end of the 23S rRNA, where it nucleates assembly of the 50S subunit. Functionally, one of the proteins that surrounds the polypeptide exit tunnel on the outside of the subunit. This is Large ribosomal subunit protein uL24 from Roseiflexus sp. (strain RS-1).